A 268-amino-acid polypeptide reads, in one-letter code: 4-hydroxy-tetrahydrodipicolinate reductase (268 aa).

7-12 (GANGRM) is a binding site for NAD(+). Arg34 contacts NADP(+). Residues 97–99 (GTT) and 121–124 (SENM) contribute to the NAD(+) site. Residue His155 is the Proton donor/acceptor of the active site. His156 is a (S)-2,3,4,5-tetrahydrodipicolinate binding site. Lys159 acts as the Proton donor in catalysis. Residue 165 to 166 (GT) participates in (S)-2,3,4,5-tetrahydrodipicolinate binding.

The protein belongs to the DapB family.

The protein resides in the cytoplasm. It carries out the reaction (S)-2,3,4,5-tetrahydrodipicolinate + NAD(+) + H2O = (2S,4S)-4-hydroxy-2,3,4,5-tetrahydrodipicolinate + NADH + H(+). The catalysed reaction is (S)-2,3,4,5-tetrahydrodipicolinate + NADP(+) + H2O = (2S,4S)-4-hydroxy-2,3,4,5-tetrahydrodipicolinate + NADPH + H(+). It participates in amino-acid biosynthesis; L-lysine biosynthesis via DAP pathway; (S)-tetrahydrodipicolinate from L-aspartate: step 4/4. Functionally, catalyzes the conversion of 4-hydroxy-tetrahydrodipicolinate (HTPA) to tetrahydrodipicolinate. This is 4-hydroxy-tetrahydrodipicolinate reductase from Bartonella bacilliformis (strain ATCC 35685 / KC583 / Herrer 020/F12,63).